The primary structure comprises 606 residues: WD repeat-containing protein 1 (606 aa).

WD repeat units follow at residues 4–45, 48–87, 93–135, 138–176, 180–218, 224–263, 270–306, 311–351, 358–408, 432–474, 480–518, 523–561, and 566–604; these read EIKK…LRNI, PAIA…IWDT, LLKY…LWDS, SVGE…FFEG, KFKF…IYDG, VCAL…IWDV, NTFT…YLDK, KPLR…YWDS, SFAG…KLDV, LKDQ…LYSI, KDEG…VFSV, SENN…VWTL, and TRVK…EWTI. N6-acetyllysine occurs at positions 28, 81, 95, and 115. The residue at position 238 (Y238) is a Phosphotyrosine. K480 is subject to N6-acetyllysine.

The protein belongs to the WD repeat AIP1 family.

It is found in the cytoplasm. The protein localises to the cytoskeleton. The protein resides in the cell projection. Its subcellular location is the podosome. Induces disassembly of actin filaments in conjunction with ADF/cofilin family proteins. Enhances cofilin-mediated actin severing. Involved in cytokinesis. Involved in chemotactic cell migration by restricting lamellipodial membrane protrusions. Involved in myocardium sarcomere organization. Required for cardiomyocyte growth and maintenance. Involved in megakaryocyte maturation and platelet shedding. Required for the establishment of planar cell polarity (PCP) during follicular epithelium development and for cell shape changes during PCP; the function seems to implicate cooperation with CFL1 and/or DSTN/ADF. Involved in the generation/maintenance of cortical tension. Involved in assembly and maintenance of epithelial apical cell junctions and plays a role in the organization of the perijunctional actomyosin belt. The protein is WD repeat-containing protein 1 (WDR1) of Bos taurus (Bovine).